A 1241-amino-acid polypeptide reads, in one-letter code: eIF-2-alpha kinase GCN2 (1241 aa).

Residues 1–15 (MGRSSSKKKKKRGGS) are compositionally biased toward basic residues. Residues 1–33 (MGRSSSKKKKKRGGSGRRGQLKDHGSNADEDNE) form a disordered region. An RWD domain is found at 37–148 (EEITALSAIF…EAAQEFLSEI (112 aa)). Residues 253 to 321 (PIAKLNTVQE…SLGSWSSDSL (69 aa)) form a disordered region. Composition is skewed to low complexity over residues 267–276 (DTSISSFDSS) and 307–321 (NSESESLGSWSSDSL). Residues 425–731 (FEELKPLGQG…ATELLKHAFP (307 aa)) form the Protein kinase domain. Residues 431–439 (LGQGGFGHV) and K454 contribute to the ATP site. D586 acts as the Proton acceptor in catalysis. The tract at residues 819–1219 (IPMRLLSDCP…ELKKEKVVGR (401 aa)) is histidyl-tRNA synthetase-like.

This sequence belongs to the protein kinase superfamily. Ser/Thr protein kinase family. GCN2 subfamily. In terms of assembly, homodimer; homodimerization is important for kinase activation by uncharged tRNAs. As to expression, expressed in roots, leaves, stems, buds, flowers, siliques and seedlings.

The protein localises to the cytoplasm. The catalysed reaction is L-seryl-[protein] + ATP = O-phospho-L-seryl-[protein] + ADP + H(+). It carries out the reaction L-threonyl-[protein] + ATP = O-phospho-L-threonyl-[protein] + ADP + H(+). The kinase activity is stimulated upon binding to uncharged tRNAs. Metabolic-stress sensing protein kinase that phosphorylates the alpha subunit of eukaryotic translation initiation factor 2 eIF-2-alpha in response to low amino acid availability. Plays a role as an activator of the general amino acid control pathway required for adapatation to amino acid starvation. Converts phosphorylated eIF-2-alpha either to a competitive inhibitor of translation initiation, leading to a global protein synthesis repression, and thus to a reduced overall utilization of amino acids, or to a translational initiation activation of specific mRNAs, and hence allowing reprogramming of amino acid biosynthetic gene expression to alleviate nutrient depletion. Binds uncharged tRNAs. The sequence is that of eIF-2-alpha kinase GCN2 from Arabidopsis thaliana (Mouse-ear cress).